Reading from the N-terminus, the 452-residue chain is Mitochondrial import inner membrane translocase subunit TIM44 (452 aa).

Phosphothreonine is present on threonine 128. 166–173 (GGEKLGRT) provides a ligand contact to ATP. Residue serine 180 is modified to Phosphoserine. Lysine 217 carries the post-translational modification N6-succinyllysine.

The protein belongs to the Tim44 family. As to quaternary structure, probable component of the PAM complex at least composed of a mitochondrial HSP70 protein, GRPEL1 or GRPEL2, TIMM44, TIMM16/PAM16 and TIMM14/DNAJC19. The complex interacts with the TIMM23 component of the TIM23 complex. Interacts with SLC25A4/ANT1 and SLC25A5/ANT2; leading to inhibit the presequence translocase TIMM23, thereby promoting stabilization of PINK1.

It is found in the mitochondrion inner membrane. It localises to the mitochondrion matrix. Its function is as follows. Essential component of the PAM complex, a complex required for the translocation of transit peptide-containing proteins from the inner membrane into the mitochondrial matrix in an ATP-dependent manner. Recruits mitochondrial HSP70 to drive protein translocation into the matrix using ATP as an energy source. In Homo sapiens (Human), this protein is Mitochondrial import inner membrane translocase subunit TIM44 (TIMM44).